Reading from the N-terminus, the 123-residue chain is Ribosome-binding factor A (123 aa).

Belongs to the RbfA family. Monomer. Binds 30S ribosomal subunits, but not 50S ribosomal subunits or 70S ribosomes.

The protein localises to the cytoplasm. Its function is as follows. One of several proteins that assist in the late maturation steps of the functional core of the 30S ribosomal subunit. Associates with free 30S ribosomal subunits (but not with 30S subunits that are part of 70S ribosomes or polysomes). Required for efficient processing of 16S rRNA. May interact with the 5'-terminal helix region of 16S rRNA. The protein is Ribosome-binding factor A of Geotalea daltonii (strain DSM 22248 / JCM 15807 / FRC-32) (Geobacter daltonii).